Here is a 482-residue protein sequence, read N- to C-terminus: Rho GTPase-activating protein 15 (482 aa).

Phosphoserine is present on residues Ser51, Ser111, Ser205, Ser208, and Ser250. The PH domain occupies 87–198 (MVEKEGYLQK…WFHAIKNAID (112 aa)). Residues 288-477 (SHLHTVCERE…FMLTEYDKIF (190 aa)) form the Rho-GAP domain.

Its subcellular location is the cytoplasm. It is found in the membrane. In terms of biological role, GTPase activator for the Rho-type GTPases by converting them to an inactive GDP-bound state. Has activity toward RAC1. Overexpression results in an increase in actin stress fibers and cell contraction. This chain is Rho GTPase-activating protein 15 (Arhgap15), found in Rattus norvegicus (Rat).